A 234-amino-acid chain; its full sequence is Cyclo(L-leucyl-L-leucyl) synthase (234 aa).

The active-site Nucleophile is Ser-28. Substrate-binding positions include 171-175, Tyr-195, and 200-201; these read YVLAE and EL.

This sequence belongs to the CDPS family.

It catalyses the reaction 2 L-leucyl-tRNA(Leu) = cyclo(L-leucyl-L-leucyl) + 2 tRNA(Leu) + 2 H(+). Functionally, it uses activated amino acids in the form of aminoacyl-tRNAs (aa-tRNAs) as substrates to catalyze the ATP-independent formation of cyclodipeptides which are intermediates in diketopiperazine (DKP) biosynthetic pathways. Catalyzes the formation of cyclo(L-Leu-L-Leu) (cLL) from L-leucyl-tRNA(Leu). Can incorporate various nonpolar residues, such as L-phenylalanine, L-leucine and L-methionine, into cyclodipeptides. This chain is Cyclo(L-leucyl-L-leucyl) synthase, found in Staphylococcus haemolyticus (strain JCSC1435).